The following is a 1479-amino-acid chain: Type VII secretion system protein EssC (1479 aa).

At 1 to 229 (MHKLIIKYNK…RPPQPIQKNN (229 aa)) the chain is on the cytoplasmic side. The chain crosses the membrane as a helical span at residues 230 to 252 (TVIWRSIIPPLVMIALTVVIFLV). Over 253-256 (RPIG) the chain is Extracellular. Residues 257–279 (IYILMMIGMSSVTIVFGITTYFS) traverse the membrane as a helical segment. Residues 280–1479 (EKKKYNKDVE…QAYQKIRWFK (1200 aa)) lie on the Cytoplasmic side of the membrane. FtsK domains follow at residues 652–846 (DDIL…QDSN) and 997–1183 (QGPM…SEVS). Residues 672 to 679 (GTTGSGKS) and 1014 to 1021 (GSPGYGRT) contribute to the ATP site.

Belongs to the EssC family. In terms of assembly, homooligomer. Interacts with EsaE.

Its subcellular location is the cell membrane. Component of the type VII secretion system (Ess). Required for the secretion of substrates including EsxA and EsxB. However, unable to support secretion of the substrate protein EsxC. The chain is Type VII secretion system protein EssC from Staphylococcus aureus (strain MSSA476).